Here is a 349-residue protein sequence, read N- to C-terminus: Ferredoxin--NADP reductase 1 (349 aa).

Residues glutamate 36, lysine 44, tyrosine 48, valine 88, leucine 123, aspartate 290, and serine 331 each coordinate FAD.

The protein belongs to the ferredoxin--NADP reductase type 2 family. Homodimer. FAD is required as a cofactor.

It carries out the reaction 2 reduced [2Fe-2S]-[ferredoxin] + NADP(+) + H(+) = 2 oxidized [2Fe-2S]-[ferredoxin] + NADPH. The polypeptide is Ferredoxin--NADP reductase 1 (Bacillus cereus (strain ATCC 10987 / NRS 248)).